The sequence spans 980 residues: Zinc finger BED domain-containing protein 6 (980 aa).

Positions 1-89 (MSVCTLSVPV…ILAKKFSKDL (89 aa)) are required for nucleolar localization. The disordered stretch occupies residues 89–109 (LGSGRPVADAPASLASGAPEQ). A BED-type 1 zinc finger spans residues 130–187 (AKTSIVWHFFHVDPQYTWRAICNLCEKSVSRGKPGSHLGTSTLQRHLQARHSPHWTRA). Zn(2+) is bound by residues C151, C154, H175, and H180. Positions 201–239 (LDLSLSPPSPGSNGSFEYIPTDSVDENRMGKKRDKSASD) are disordered. Over residues 203–215 (LSLSPPSPGSNGS) the composition is skewed to low complexity. The segment at 265-322 (AKTSAVWNFFYTDPQHISRAVCNICKRSVSRGRPGSHLGTSTLQRHLQATHPIHWAVA) adopts a BED-type 2 zinc-finger fold. Zn(2+)-binding residues include C286, C289, H310, and H315. Residues 328–397 (AIGNGLDETE…ADQDNPVHAQ (70 aa)) are disordered. The segment covering 360–373 (TAEDLSDSDTDEPP) has biased composition (acidic residues). A Phosphoserine modification is found at S383. Residues 868–950 (VVDEYFKEKY…EQLIFLKMNL (83 aa)) form an HATC (Hobo-Ac-Tam3) domain region.

In terms of tissue distribution, expressed in pancreatic islet cells and weakly expressed in surrounding exocrine tissues (at protein level). Expressed in muscle and brain (at protein level). Shows broad tissue distribution with expression detected in brain, stomach, intestine, heart, kidney, liver, lung, skeletal muscle, ovary, spleen, tail and testis.

The protein resides in the nucleus. Its subcellular location is the nucleolus. It is found in the cytoplasm. Functionally, transcriptional repressor which binds to the consensus sequence 5'-GCTCGC-3', transcription regulation may be tissue-specific. Regulates the expression of target genes such as: IGF2, PGAP6/TMEM8, ENHO, and PIANP. Acts as a transcriptional repressor of growth factor IGF2, thereby negatively regulating postnatal growth of muscles and internal organs, especially in females. Negatively regulates myoblast differentiation and myoblast mitochondrial activity via its regulation of IGF2 transcription. Negatively regulates the cell cycle of myoblasts, potentially via transcriptional regulation of the E2F family of transcription factors such as: E2F1 and E2F2. Positively regulates the cell cycle and survival of pancreatic beta cells. Binds to the CDH2 gene and may directly repress CDH2 transcription. Probably by controlling CDH2 expression, regulates pancreatic beta cell adhesion, and formation of cell-to-cell junctions between pancreatic beta cells and neural crest stem cells. May also play a role in embryonic beta cell differentiation. May play a role in insulin sensitivity and glucose clearance. The protein is Zinc finger BED domain-containing protein 6 of Mus musculus (Mouse).